The following is a 376-amino-acid chain: Erythronate-4-phosphate dehydrogenase (376 aa).

Substrate is bound by residues Ser-45 and Thr-67. NAD(+) is bound by residues 127-128, Asp-147, and Thr-176; that span reads QV. Arg-209 is an active-site residue. Asp-233 contacts NAD(+). Glu-238 is a catalytic residue. His-255 (proton donor) is an active-site residue. An NAD(+)-binding site is contributed by Gly-258. Tyr-259 contributes to the substrate binding site.

This sequence belongs to the D-isomer specific 2-hydroxyacid dehydrogenase family. PdxB subfamily. Homodimer.

Its subcellular location is the cytoplasm. It carries out the reaction 4-phospho-D-erythronate + NAD(+) = (R)-3-hydroxy-2-oxo-4-phosphooxybutanoate + NADH + H(+). Its pathway is cofactor biosynthesis; pyridoxine 5'-phosphate biosynthesis; pyridoxine 5'-phosphate from D-erythrose 4-phosphate: step 2/5. Its function is as follows. Catalyzes the oxidation of erythronate-4-phosphate to 3-hydroxy-2-oxo-4-phosphonooxybutanoate. The chain is Erythronate-4-phosphate dehydrogenase from Aliivibrio salmonicida (strain LFI1238) (Vibrio salmonicida (strain LFI1238)).